The following is a 66-amino-acid chain: MTPVEIRNMNNEELLKLLEEKKRTLMNLRFQNALGELRDPSLIQKTKKDIARIKTILRERELGIRR.

The protein belongs to the universal ribosomal protein uL29 family.

The sequence is that of Large ribosomal subunit protein uL29 from Fervidobacterium nodosum (strain ATCC 35602 / DSM 5306 / Rt17-B1).